The following is a 203-amino-acid chain: Putative archaetidylserine decarboxylase proenzyme (203 aa).

Catalysis depends on Ser-171, which acts as the Schiff-base intermediate with substrate; via pyruvic acid. Position 171 is a pyruvic acid (Ser); by autocatalysis (Ser-171).

The protein belongs to the phosphatidylserine decarboxylase family. PSD-A subfamily. Heterodimer of a large membrane-associated beta subunit and a small pyruvoyl-containing alpha subunit. Pyruvate serves as cofactor. In terms of processing, is synthesized initially as an inactive proenzyme. Formation of the active enzyme involves a self-maturation process in which the active site pyruvoyl group is generated from an internal serine residue via an autocatalytic post-translational modification. Two non-identical subunits are generated from the proenzyme in this reaction, and the pyruvate is formed at the N-terminus of the alpha chain, which is derived from the carboxyl end of the proenzyme. The post-translation cleavage follows an unusual pathway, termed non-hydrolytic serinolysis, in which the side chain hydroxyl group of the serine supplies its oxygen atom to form the C-terminus of the beta chain, while the remainder of the serine residue undergoes an oxidative deamination to produce ammonia and the pyruvoyl prosthetic group on the alpha chain.

The protein localises to the cell membrane. It carries out the reaction archaetidylserine + H(+) = archaetidylethanolamine + CO2. Functionally, catalyzes the formation of archaetidylethanolamine (PtdEtn) from archaetidylserine (PtdSer). This Methanosarcina barkeri (strain Fusaro / DSM 804) protein is Putative archaetidylserine decarboxylase proenzyme.